Consider the following 362-residue polypeptide: 3-dehydroquinate synthase (362 aa).

NAD(+) contacts are provided by residues Asp71 to Lys76, Gly105 to Asp109, Thr129 to Thr130, Lys142, Lys151, and Cys169 to Thr172. Residues Glu184, His247, and His264 each coordinate Zn(2+).

This sequence belongs to the sugar phosphate cyclases superfamily. Dehydroquinate synthase family. Co(2+) serves as cofactor. Requires Zn(2+) as cofactor. The cofactor is NAD(+).

It is found in the cytoplasm. The catalysed reaction is 7-phospho-2-dehydro-3-deoxy-D-arabino-heptonate = 3-dehydroquinate + phosphate. It participates in metabolic intermediate biosynthesis; chorismate biosynthesis; chorismate from D-erythrose 4-phosphate and phosphoenolpyruvate: step 2/7. Catalyzes the conversion of 3-deoxy-D-arabino-heptulosonate 7-phosphate (DAHP) to dehydroquinate (DHQ). In Cronobacter sakazakii (strain ATCC BAA-894) (Enterobacter sakazakii), this protein is 3-dehydroquinate synthase.